Here is a 208-residue protein sequence, read N- to C-terminus: Small ribosomal subunit protein uS4A (208 aa).

The 64-residue stretch at 98–161 (LRLDNVVFRM…RKVLRISEAL (64 aa)) folds into the S4 RNA-binding domain.

Belongs to the universal ribosomal protein uS4 family. In terms of assembly, part of the 30S ribosomal subunit. Contacts protein S5. The interaction surface between S4 and S5 is involved in control of translational fidelity.

Its function is as follows. One of the primary rRNA binding proteins, it binds directly to 16S rRNA where it nucleates assembly of the body of the 30S subunit. With S5 and S12 plays an important role in translational accuracy. The sequence is that of Small ribosomal subunit protein uS4A from Myxococcus xanthus (strain DK1622).